The sequence spans 323 residues: tRNA U34 carboxymethyltransferase (323 aa).

Carboxy-S-adenosyl-L-methionine-binding positions include K91, W105, K110, G130, I181–E182, M196, Y200, and R315.

This sequence belongs to the class I-like SAM-binding methyltransferase superfamily. CmoB family. In terms of assembly, homotetramer.

It carries out the reaction carboxy-S-adenosyl-L-methionine + 5-hydroxyuridine(34) in tRNA = 5-carboxymethoxyuridine(34) in tRNA + S-adenosyl-L-homocysteine + H(+). Its function is as follows. Catalyzes carboxymethyl transfer from carboxy-S-adenosyl-L-methionine (Cx-SAM) to 5-hydroxyuridine (ho5U) to form 5-carboxymethoxyuridine (cmo5U) at position 34 in tRNAs. This Edwardsiella ictaluri (strain 93-146) protein is tRNA U34 carboxymethyltransferase.